A 513-amino-acid polypeptide reads, in one-letter code: Putative ribose/galactose/methyl galactoside import ATP-binding protein 2 (513 aa).

ABC transporter domains lie at leucine 24 to glutamate 260 and valine 270 to leucine 510. Glycine 56–serine 63 is an ATP binding site.

The protein belongs to the ABC transporter superfamily. Carbohydrate importer 2 (CUT2) (TC 3.A.1.2) family.

Its subcellular location is the cell inner membrane. It carries out the reaction D-ribose(out) + ATP + H2O = D-ribose(in) + ADP + phosphate + H(+). It catalyses the reaction D-galactose(out) + ATP + H2O = D-galactose(in) + ADP + phosphate + H(+). Functionally, part of an ABC transporter complex involved in carbohydrate import. Could be involved in ribose, galactose and/or methyl galactoside import. Responsible for energy coupling to the transport system. This is Putative ribose/galactose/methyl galactoside import ATP-binding protein 2 from Agrobacterium fabrum (strain C58 / ATCC 33970) (Agrobacterium tumefaciens (strain C58)).